The sequence spans 504 residues: Protein phosphatase 1J (504 aa).

Disordered regions lie at residues 1-102 (MLNR…RLPW) and 194-217 (PLCL…SPQS). Residues 14–23 (SSSGTSSQRS) are compositionally biased toward low complexity. A Phosphothreonine modification is found at Thr-41. Over residues 59 to 73 (TAETPVSFSRPTFLQ) the composition is skewed to polar residues. Phosphoserine occurs at positions 65 and 75. The 394-residue stretch at 103–496 (STGYAEVINA…DDISVFVIPL (394 aa)) folds into the PPM-type phosphatase domain. The segment covering 197-217 (LPSTPGTPGVSSPSQLVSPQS) has biased composition (low complexity).

The protein belongs to the PP2C family. Interacts with UBE2I/UBC9.

The enzyme catalyses O-phospho-L-seryl-[protein] + H2O = L-seryl-[protein] + phosphate. The catalysed reaction is O-phospho-L-threonyl-[protein] + H2O = L-threonyl-[protein] + phosphate. This chain is Protein phosphatase 1J (Ppm1j), found in Rattus norvegicus (Rat).